We begin with the raw amino-acid sequence, 42 residues long: uncharacterized protein (42 aa).

Residues 1-42 (MTTGKPQSFEKMRTPFPGRSKAKGPQSDIIPSAPPNTPVTEH) form a disordered region. A compositionally biased stretch (pro residues) spans 32–42 (SAPPNTPVTEH).

This is an uncharacterized protein from Schizosaccharomyces pombe (strain 972 / ATCC 24843) (Fission yeast).